Consider the following 381-residue polypeptide: L-lactate dehydrogenase (381 aa).

One can recognise an FMN hydroxy acid dehydrogenase domain in the interval methionine 1 to lysine 380. Tyrosine 24 is a substrate binding site. FMN-binding residues include serine 106 and glutamine 127. Tyrosine 129 is a substrate binding site. Position 155 (threonine 155) interacts with FMN. Residue arginine 164 coordinates substrate. Lysine 251 lines the FMN pocket. The Proton acceptor role is filled by histidine 275. Substrate is bound at residue arginine 278. Aspartate 306–arginine 330 lines the FMN pocket.

The protein belongs to the FMN-dependent alpha-hydroxy acid dehydrogenase family. Requires FMN as cofactor.

It localises to the cell inner membrane. The catalysed reaction is (S)-lactate + A = pyruvate + AH2. In terms of biological role, catalyzes the conversion of L-lactate to pyruvate. Is coupled to the respiratory chain. The chain is L-lactate dehydrogenase from Haemophilus influenzae (strain PittEE).